We begin with the raw amino-acid sequence, 182 residues long: Sec-independent protein translocase protein TatB (182 aa).

A helical transmembrane segment spans residues 1-21 (MFDIGFSELLLVFVIGLIVLG). 2 disordered regions span residues 88-107 (AAESMKRTYSANDPEQASDE) and 121-182 (TQHE…SDKP). Residues 168 to 182 (AAPVVESSPSSSDKP) are compositionally biased toward low complexity.

This sequence belongs to the TatB family. The Tat system comprises two distinct complexes: a TatABC complex, containing multiple copies of TatA, TatB and TatC subunits, and a separate TatA complex, containing only TatA subunits. Substrates initially bind to the TatABC complex, which probably triggers association of the separate TatA complex to form the active translocon.

Its subcellular location is the cell inner membrane. Functionally, part of the twin-arginine translocation (Tat) system that transports large folded proteins containing a characteristic twin-arginine motif in their signal peptide across membranes. Together with TatC, TatB is part of a receptor directly interacting with Tat signal peptides. TatB may form an oligomeric binding site that transiently accommodates folded Tat precursor proteins before their translocation. This Salmonella typhi protein is Sec-independent protein translocase protein TatB.